Here is a 475-residue protein sequence, read N- to C-terminus: MAFASEDIAYHSSNAVYRVPSNRHEADQEALLGKPLDYPAPGLQRPEDRFNGAYIIFFCLGIGGLLPWNFFVTAKEYWAFKLRNCSSPASGKDPEDADILNYFESYLAVASTVPSLLFLVANFLLVNRIRVHVRVLASLSVSLAIFVVMAVLVRVDTSSWTRGFFSIAMACMAIISSSSTIFNSSVYGLTGSFPMRNAQALISGGAMGGTVSAVASLVDLAASSDVRDSALAFFLTAAVFLGLCVGLYLLLPQLEYARYYMRPVVPIHVFSSEDSPPRDAPSTSSVAPASRAVHTPPLGPILKKTAGLGFCAVFLYFITALIFPAISTNIQPMHKGTGSPWTSKFYVPLTVFLLFNFADLCGRQVTAWIQVPGPRSKLLPILAVSRVCLVPLFLLCNYQPRSHLTLVLFQSDIYPILFTCLLGLSNGYLSTLVLMYGPKIVPRELAEATSVVMLFYMSLGLMLGSACAALLEHFI.

The Cytoplasmic portion of the chain corresponds to 1–51 (MAFASEDIAYHSSNAVYRVPSNRHEADQEALLGKPLDYPAPGLQRPEDRFN). Ser-21 carries the phosphoserine modification. The short motif at 31-32 (LL) is the Dileucine internalization motif element. A helical membrane pass occupies residues 52 to 72 (GAYIIFFCLGIGGLLPWNFFV). The Extracellular segment spans residues 73–105 (TAKEYWAFKLRNCSSPASGKDPEDADILNYFES). Asn-84 carries N-linked (GlcNAc...) asparagine glycosylation. Residues 106–126 (YLAVASTVPSLLFLVANFLLV) traverse the membrane as a helical segment. At 127 to 132 (NRIRVH) the chain is on the cytoplasmic side. The chain crosses the membrane as a helical span at residues 133 to 153 (VRVLASLSVSLAIFVVMAVLV). Topologically, residues 154–162 (RVDTSSWTR) are extracellular. Residues 163–183 (GFFSIAMACMAIISSSSTIFN) form a helical membrane-spanning segment. At 184 to 199 (SSVYGLTGSFPMRNAQ) the chain is on the cytoplasmic side. Residues 200–220 (ALISGGAMGGTVSAVASLVDL) traverse the membrane as a helical segment. Topologically, residues 221-230 (AASSDVRDSA) are extracellular. The helical transmembrane segment at 231 to 251 (LAFFLTAAVFLGLCVGLYLLL) threads the bilayer. The Cytoplasmic segment spans residues 252–305 (PQLEYARYYMRPVVPIHVFSSEDSPPRDAPSTSSVAPASRAVHTPPLGPILKKT). The disordered stretch occupies residues 272–291 (SEDSPPRDAPSTSSVAPASR). A helical membrane pass occupies residues 306–326 (AGLGFCAVFLYFITALIFPAI). Over 327–340 (STNIQPMHKGTGSP) the chain is Extracellular. Residues 341-361 (WTSKFYVPLTVFLLFNFADLC) traverse the membrane as a helical segment. At 362 to 377 (GRQVTAWIQVPGPRSK) the chain is on the cytoplasmic side. The chain crosses the membrane as a helical span at residues 378–398 (LLPILAVSRVCLVPLFLLCNY). Residues 399–414 (QPRSHLTLVLFQSDIY) lie on the Extracellular side of the membrane. A helical transmembrane segment spans residues 415-437 (PILFTCLLGLSNGYLSTLVLMYG). Residues 438 to 450 (PKIVPRELAEATS) lie on the Cytoplasmic side of the membrane. Residues 451 to 471 (VVMLFYMSLGLMLGSACAALL) form a helical membrane-spanning segment. The Extracellular portion of the chain corresponds to 472–475 (EHFI).

The protein belongs to the SLC29A/ENT transporter (TC 2.A.57) family. Widely expressed. Highest levels in heart and liver (at protein level).

Its subcellular location is the lysosome membrane. It localises to the late endosome membrane. The protein localises to the mitochondrion membrane. It is found in the cell membrane. It carries out the reaction adenosine(in) = adenosine(out). It catalyses the reaction guanosine(in) = guanosine(out). The catalysed reaction is inosine(in) = inosine(out). The enzyme catalyses uridine(out) = uridine(in). It carries out the reaction cytidine(in) = cytidine(out). It catalyses the reaction thymidine(in) = thymidine(out). The catalysed reaction is 2'-deoxyadenosine(in) = 2'-deoxyadenosine(out). The enzyme catalyses 2'-deoxycytidine(in) = 2'-deoxycytidine(out). It carries out the reaction guanine(out) = guanine(in). It catalyses the reaction uracil(in) = uracil(out). The catalysed reaction is (R)-noradrenaline(out) = (R)-noradrenaline(in). The enzyme catalyses dopamine(out) = dopamine(in). It carries out the reaction serotonin(out) = serotonin(in). It catalyses the reaction tyramine(in) = tyramine(out). The catalysed reaction is ATP(in) = ATP(out). Its function is as follows. Uniporter that mediates the facilitative transport of nucleoside across lysosomal and mitochondrial membranes. Functions as a non-electrogenic Na(+)-independent transporter. Substrate transport is pH-dependent and enhanced under acidic condition, probably reflecting the location of the transporter in acidic intracellular compartments. Proton is not a cotransporting ion but most likely change the ionization state of the transporter which dictates transport-permissible/impermissible conformation for nucleoside translocation. May direct the nucleoside transport from lysosomes to cytosol or cytosol to mitochondria to facilitate the fundamental function of salvage synthesis of nucleic acids. Involved in the transport of nucleosides (adenosine, guanosine, uridine, thymidine, cytidine and inosine) and deoxynucleosides (deoxyadenosine, deoxycytidine). Also mediates transport of purine nucleobases (adenine, guanine) and pyrimidine nucleobases (uracil). Also able to transport monoamine neurotransmitters dopamine, serotonin, noradrenaline and tyramine. Capable of transporting ATP. Mediates nucleoside export from lysosomes in macrophages, which regulates macrophage functions and numbers. This is Equilibrative nucleoside transporter 3 from Rattus norvegicus (Rat).